The primary structure comprises 128 residues: Small ribosomal subunit protein uS12 (128 aa).

Residues 1–24 are disordered; sequence MPTFNQLVKYGREKRKKKSKAPAL. D89 carries the post-translational modification 3-methylthioaspartic acid. Residues 105-128 are disordered; the sequence is AGVEGRRQSRSKYGTKRPKEEKGG.

The protein belongs to the universal ribosomal protein uS12 family. In terms of assembly, part of the 30S ribosomal subunit. Contacts proteins S8 and S17. May interact with IF1 in the 30S initiation complex.

Functionally, with S4 and S5 plays an important role in translational accuracy. Its function is as follows. Interacts with and stabilizes bases of the 16S rRNA that are involved in tRNA selection in the A site and with the mRNA backbone. Located at the interface of the 30S and 50S subunits, it traverses the body of the 30S subunit contacting proteins on the other side and probably holding the rRNA structure together. The combined cluster of proteins S8, S12 and S17 appears to hold together the shoulder and platform of the 30S subunit. In Aquifex aeolicus (strain VF5), this protein is Small ribosomal subunit protein uS12.